The following is a 396-amino-acid chain: Inhibitory POU protein (396 aa).

Positions 86-95 match the POU-IV box motif; that stretch reads RAEALAAVDI. Positions 222-299 constitute a POU-specific domain; the sequence is DTDTDPRELE…ILQAWLEEAE (78 aa). The tract at residues 302-328 is disordered; it reads AKNKRRDPDAPSVLPAGEKKRKRTSIA. Positions 320-377 form a DNA-binding region, homeobox; atypical; it reads KKRKRTSIAAPEKRSLEAYFAVQPRPSGEKIAAIAEKLDLKKNVVRVWFCNQRQKQKR.

This sequence belongs to the POU transcription factor family. Class-4 subfamily. In terms of tissue distribution, coexpressed with vvl in overlapping subsets of neurons in the embryonic central nervous system. Expressed in olfactory neurons.

It is found in the nucleus. In terms of biological role, modulates gene transcription; simultaneously generates both a specific activator and an inhibitor of gene transcription, capable of modulating two distinct regulatory programs during neural development. Has a role in olfactory behavior. This Drosophila melanogaster (Fruit fly) protein is Inhibitory POU protein (acj6).